We begin with the raw amino-acid sequence, 367 residues long: 2-aminoethylphosphonate--pyruvate transaminase (367 aa).

K194 is subject to N6-(pyridoxal phosphate)lysine.

It belongs to the class-V pyridoxal-phosphate-dependent aminotransferase family. PhnW subfamily. Homodimer. The cofactor is pyridoxal 5'-phosphate.

The catalysed reaction is (2-aminoethyl)phosphonate + pyruvate = phosphonoacetaldehyde + L-alanine. In terms of biological role, involved in phosphonate degradation. This Salmonella paratyphi B (strain ATCC BAA-1250 / SPB7) protein is 2-aminoethylphosphonate--pyruvate transaminase.